The sequence spans 681 residues: SRSF protein kinase 2 (681 aa).

The interval 1–63 (MSVNSEKSSS…EQEDPADYCK (63 aa)) is disordered. The span at 22–41 (LVPPPPPPPPPPPLPDPAPP) shows a compositional bias: pro residues. The segment covering 42–59 (EPEEEILGSDDEEQEDPA) has biased composition (acidic residues). Ser-50 is modified (phosphoserine). The Protein kinase domain occupies 79 to 681 (YHVIRKLGWG…ECLRHPWLNS (603 aa)). ATP-binding positions include 85-93 (LGWGHFSTV) and Lys-108. Asp-212 (proton acceptor) is an active-site residue. Disordered regions lie at residues 237-270 (WQKA…KKKL), 302-452 (ENIT…PLFS), and 467-499 (GSPL…KTKT). Phosphothreonine occurs at positions 331 and 332. A Phosphoserine modification is found at Ser-378. A compositionally biased stretch (acidic residues) spans 395-419 (QLEDEEDDEDDCANPEEYNLDEPNA). Residues 421–431 (SDYTYSSSYEQ) are compositionally biased toward polar residues. Ser-468 carries the post-translational modification Phosphoserine. Thr-471 carries the post-translational modification Phosphothreonine. 3 positions are modified to phosphoserine: Ser-477, Ser-479, and Ser-483. Position 485 is a phosphothreonine; by PKB/AKT1 (Thr-485). Residues Ser-487 and Ser-490 each carry the phosphoserine modification. Ser-581 is modified (phosphoserine; by CK2).

This sequence belongs to the protein kinase superfamily. CMGC Ser/Thr protein kinase family. Associates with U4/U6-U5 tri-small nuclear ribonucleoproteins (U4/U6-U5 tri-snRNPs). Interacts with PKB/AKT1 in a phosphorylation-dependent manner. The phosphorylated form (by PKB/AKT1) interacts with YWHAB and YWHAE. Interaction with YWHAB suppresses its cleavage by caspases and inhibits the release of its N-terminal pro-apoptotic fragment. Interacts with SFN. Interacts with ACIN1. Interacts with POLR2A/RNA polymerase II; the interaction occurs during the co-transcriptional formation of inappropriate R-loops. It depends on Mg(2+) as a cofactor. In terms of processing, phosphorylation at Thr-485 by PKB/AKT1 enhances its stimulatory activity in triggering cyclin-D1 (CCND1) expression and promoting apoptosis in neurons, which can be blocked by YWHAB. It also enhances its protein kinase activity toward ACIN1 and SRSF2, promotes its nuclear translocation and prevents its proteolytic cleavage. Post-translationally, proteolytically cleaved at Asp-137 and Asp-401 by caspase-3 during apoptotic cell death. Cleavage at Asp-137 which is the major site of cleavage, produces a small N-terminal fragment that translocates into nucleus and promotes VP16-induced apoptosis. Expressed in testes, lung and brain.

It localises to the cytoplasm. The protein localises to the nucleus. The protein resides in the nucleoplasm. It is found in the nucleus speckle. Its subcellular location is the chromosome. The enzyme catalyses L-seryl-[protein] + ATP = O-phospho-L-seryl-[protein] + ADP + H(+). The catalysed reaction is L-threonyl-[protein] + ATP = O-phospho-L-threonyl-[protein] + ADP + H(+). Activated by phosphorylation on Ser-50 and Ser-581. Its function is as follows. Serine/arginine-rich protein-specific kinase which specifically phosphorylates its substrates at serine residues located in regions rich in arginine/serine dipeptides, known as RS domains and is involved in the phosphorylation of SR splicing factors and the regulation of splicing. Promotes neuronal apoptosis by up-regulating cyclin-D1 (CCND1) expression. This is done by the phosphorylation of SRSF2, leading to the suppression of p53/TP53 phosphorylation thereby relieving the repressive effect of p53/TP53 on cyclin-D1 (CCND1) expression. Phosphorylates ACIN1, and redistributes it from the nuclear speckles to the nucleoplasm, resulting in cyclin A1 but not cyclin A2 up-regulation. Plays an essential role in spliceosomal B complex formation via the phosphorylation of DDX23/PRP28. Probably by phosphorylating DDX23, leads to the suppression of incorrect R-loops formed during transcription; R-loops are composed of a DNA:RNA hybrid and the associated non-template single-stranded DNA. The chain is SRSF protein kinase 2 from Mus musculus (Mouse).